We begin with the raw amino-acid sequence, 484 residues long: Adenylyltransferase and sulfurtransferase uba4 (484 aa).

The span at 39–49 (AKAQSAAATTA) shows a compositional bias: low complexity. The interval 39 to 58 (AKAQSAAATTAGDNHDKPRR) is disordered. ATP-binding positions include glycine 98, aspartate 119, 126–130 (SNLHR), lysine 143, and 187–188 (DN). Positions 236 and 239 each coordinate Zn(2+). Residue cysteine 253 is the Glycyl thioester intermediate; for adenylyltransferase activity of the active site. Zn(2+) contacts are provided by cysteine 313 and cysteine 316. One can recognise a Rhodanese domain in the interval 370–482 (PEKTPTLIDV…WREQVDPEWP (113 aa)). Cysteine 437 functions as the Cysteine persulfide intermediate; for sulfurtransferase activity in the catalytic mechanism.

This sequence in the N-terminal section; belongs to the HesA/MoeB/ThiF family. UBA4 subfamily. The cofactor is Zn(2+).

Its subcellular location is the cytoplasm. The protein localises to the cytosol. It carries out the reaction [molybdopterin-synthase sulfur-carrier protein]-C-terminal Gly-Gly + ATP + H(+) = [molybdopterin-synthase sulfur-carrier protein]-C-terminal Gly-Gly-AMP + diphosphate. The enzyme catalyses [molybdopterin-synthase sulfur-carrier protein]-C-terminal Gly-Gly-AMP + S-sulfanyl-L-cysteinyl-[cysteine desulfurase] + AH2 = [molybdopterin-synthase sulfur-carrier protein]-C-terminal-Gly-aminoethanethioate + L-cysteinyl-[cysteine desulfurase] + A + AMP + 2 H(+). It participates in tRNA modification; 5-methoxycarbonylmethyl-2-thiouridine-tRNA biosynthesis. It functions in the pathway cofactor biosynthesis; molybdopterin biosynthesis. Plays a central role in 2-thiolation of mcm(5)S(2)U at tRNA wobble positions of cytosolic tRNA(Lys), tRNA(Glu) and tRNA(Gln). Also essential during biosynthesis of the molybdenum cofactor. Acts by mediating the C-terminal thiocarboxylation of sulfur carriers urm1 and mocs2a. Its N-terminus first activates urm1 and mocs2a as acyl-adenylates (-COAMP), then the persulfide sulfur on the catalytic cysteine is transferred to urm1 and mocs2a to form thiocarboxylation (-COSH) of their C-terminus. The reaction probably involves hydrogen sulfide that is generated from the persulfide intermediate and that acts as a nucleophile towards urm1 and mocs2a. Subsequently, a transient disulfide bond is formed. Does not use thiosulfate as sulfur donor; nfs1 probably acting as a sulfur donor for thiocarboxylation reactions. The sequence is that of Adenylyltransferase and sulfurtransferase uba4 from Aspergillus terreus (strain NIH 2624 / FGSC A1156).